The sequence spans 267 residues: 4-hydroxy-tetrahydrodipicolinate reductase (267 aa).

Residue 11–16 (GAAGRM) coordinates NAD(+). Arg-39 contacts NADP(+). NAD(+)-binding positions include 100-102 (GTT) and 126-129 (APNF). His-156 serves as the catalytic Proton donor/acceptor. His-157 provides a ligand contact to (S)-2,3,4,5-tetrahydrodipicolinate. The active-site Proton donor is Lys-160. A (S)-2,3,4,5-tetrahydrodipicolinate-binding site is contributed by 166–167 (GT).

It belongs to the DapB family.

It localises to the cytoplasm. It catalyses the reaction (S)-2,3,4,5-tetrahydrodipicolinate + NAD(+) + H2O = (2S,4S)-4-hydroxy-2,3,4,5-tetrahydrodipicolinate + NADH + H(+). The enzyme catalyses (S)-2,3,4,5-tetrahydrodipicolinate + NADP(+) + H2O = (2S,4S)-4-hydroxy-2,3,4,5-tetrahydrodipicolinate + NADPH + H(+). The protein operates within amino-acid biosynthesis; L-lysine biosynthesis via DAP pathway; (S)-tetrahydrodipicolinate from L-aspartate: step 4/4. Catalyzes the conversion of 4-hydroxy-tetrahydrodipicolinate (HTPA) to tetrahydrodipicolinate. This Moorella thermoacetica (strain ATCC 39073 / JCM 9320) protein is 4-hydroxy-tetrahydrodipicolinate reductase.